Consider the following 240-residue polypeptide: Zein-alpha M6 (240 aa).

A signal peptide spans 1-21 (MATKIFSLLMLLALSTCVANA).

It belongs to the zein family.

Its function is as follows. Zeins are major seed storage proteins. The protein is Zein-alpha M6 of Zea mays (Maize).